A 348-amino-acid polypeptide reads, in one-letter code: Quinolinate synthase (348 aa).

Iminosuccinate contacts are provided by His47 and Ser68. Cys113 lines the [4Fe-4S] cluster pocket. Iminosuccinate is bound by residues 139-141 (YAN) and Ser156. Residue Cys200 participates in [4Fe-4S] cluster binding. Iminosuccinate-binding positions include 226–228 (HPE) and Thr243. Residue Cys297 participates in [4Fe-4S] cluster binding.

The protein belongs to the quinolinate synthase family. Type 1 subfamily. [4Fe-4S] cluster is required as a cofactor.

The protein resides in the cytoplasm. The catalysed reaction is iminosuccinate + dihydroxyacetone phosphate = quinolinate + phosphate + 2 H2O + H(+). The protein operates within cofactor biosynthesis; NAD(+) biosynthesis; quinolinate from iminoaspartate: step 1/1. Catalyzes the condensation of iminoaspartate with dihydroxyacetone phosphate to form quinolinate. This chain is Quinolinate synthase, found in Sodalis glossinidius (strain morsitans).